The following is a 516-amino-acid chain: uncharacterized protein (516 aa).

Residue serine 21 is modified to Phosphoserine. The disordered stretch occupies residues 46-74; the sequence is DLQSSMEDSNKANGNGEETTDGAEGVLQT. Positions 47 to 62 are enriched in polar residues; sequence LQSSMEDSNKANGNGE. 6 WD repeats span residues 182-227, 252-292, 295-335, 337-377, 381-421, and 426-468; these read TFPL…AVYP, YHTD…CVKS, YHSD…APSS, QVTS…KSVW, AHDG…PKMV, and LDVG…GVRK. The span at 482–493 shows a compositional bias: basic and acidic residues; that stretch reads ERIVQLEDRGAG. The tract at residues 482-516 is disordered; the sequence is ERIVQLEDRGAGEDSSDDDDYEDIEDDDDQDAEMS. A compositionally biased stretch (acidic residues) spans 495–516; sequence DSSDDDDYEDIEDDDDQDAEMS. Serine 496 and serine 497 each carry phosphoserine.

Its subcellular location is the cytoplasm. The protein resides in the nucleus. It localises to the nucleolus. This is an uncharacterized protein from Schizosaccharomyces pombe (strain 972 / ATCC 24843) (Fission yeast).